A 426-amino-acid chain; its full sequence is Phosphomethylpyrimidine synthase (426 aa).

Residues Asn-65, Met-94, Tyr-123, His-162, 184 to 186 (SRG), 225 to 228 (DGMR), and Glu-264 each bind substrate. Zn(2+) is bound at residue His-268. A substrate-binding site is contributed by Tyr-291. His-332 serves as a coordination point for Zn(2+). Positions 408, 411, and 415 each coordinate [4Fe-4S] cluster.

The protein belongs to the ThiC family. [4Fe-4S] cluster serves as cofactor.

It catalyses the reaction 5-amino-1-(5-phospho-beta-D-ribosyl)imidazole + S-adenosyl-L-methionine = 4-amino-2-methyl-5-(phosphooxymethyl)pyrimidine + CO + 5'-deoxyadenosine + formate + L-methionine + 3 H(+). It functions in the pathway cofactor biosynthesis; thiamine diphosphate biosynthesis. Its function is as follows. Catalyzes the synthesis of the hydroxymethylpyrimidine phosphate (HMP-P) moiety of thiamine from aminoimidazole ribotide (AIR) in a radical S-adenosyl-L-methionine (SAM)-dependent reaction. This is Phosphomethylpyrimidine synthase from Methanococcus maripaludis (strain C6 / ATCC BAA-1332).